Consider the following 380-residue polypeptide: Cytochrome b (380 aa).

4 consecutive transmembrane segments (helical) span residues 33 to 53, 77 to 98, 113 to 133, and 178 to 198; these read FGSLLGLCLLTQILTGLFLAM, WLIRNFHANGASFFFICLYLHI, WNVGVVLFLLVMMTAFVGYVL, and FFAFHFLFPFIIAAMTILHFL. Residues His83 and His97 each contribute to the heme b site. The heme b site is built by His182 and His196. An a ubiquinone-binding site is contributed by His201. 4 helical membrane passes run 226–246, 288–308, 320–340, and 347–367; these read YKDLLGFVVMLLALSTLSLFS, LGGVLALLSSILILMLVPILH, LTQILFWVLVADVAILTWIGG, and FIIVGQVASVLYFALFLVIMP.

The protein belongs to the cytochrome b family. The cytochrome bc1 complex contains 3 respiratory subunits (MT-CYB, CYC1 and UQCRFS1), 2 core proteins (UQCRC1 and UQCRC2) and probably 6 low-molecular weight proteins. Requires heme b as cofactor.

It localises to the mitochondrion inner membrane. Component of the ubiquinol-cytochrome c reductase complex (complex III or cytochrome b-c1 complex) that is part of the mitochondrial respiratory chain. The b-c1 complex mediates electron transfer from ubiquinol to cytochrome c. Contributes to the generation of a proton gradient across the mitochondrial membrane that is then used for ATP synthesis. This chain is Cytochrome b (mt-cyb), found in Zeus faber (John Dory).